The sequence spans 674 residues: ATP-dependent DNA helicase Rep (674 aa).

A UvrD-like helicase ATP-binding domain is found at 1-280; it reads MRLNPGQQHA…IKLEQNYRSS (280 aa). ATP is bound by residues 22–29 and R278; that span reads AGAGSGKT. The region spanning 281-562 is the UvrD-like helicase C-terminal domain; that stretch reads GRILKAANIL…QLMTLHASKG (282 aa).

It belongs to the helicase family. UvrD subfamily. As to quaternary structure, homodimer.

The enzyme catalyses Couples ATP hydrolysis with the unwinding of duplex DNA by translocating in the 3'-5' direction.. It carries out the reaction ATP + H2O = ADP + phosphate + H(+). Functionally, rep helicase is a single-stranded DNA-dependent ATPase involved in DNA replication; it can initiate unwinding at a nick in the DNA. It binds to the single-stranded DNA and acts in a progressive fashion along the DNA in the 3' to 5' direction. The polypeptide is ATP-dependent DNA helicase Rep (Salmonella typhimurium (strain LT2 / SGSC1412 / ATCC 700720)).